A 611-amino-acid polypeptide reads, in one-letter code: Phosphatidylinositol 3,4,5-trisphosphate 3-phosphatase and protein-tyrosine-phosphatase PTEN2A (611 aa).

Disordered regions lie at residues 1–42 (MSSE…GVAS) and 87–109 (GIRLSPKSPQTNDTTTEGTSSAT). Ser-91 carries the phosphoserine modification. Over residues 100–109 (TTTEGTSSAT) the composition is skewed to low complexity. The 180-residue stretch at 145–324 (RRYQEGGFDL…KYFERILTYF (180 aa)) folds into the Phosphatase tensin-type domain. Catalysis depends on Cys-263, which acts as the Phosphocysteine intermediate. The region spanning 331-458 (GRRCMLRGFR…FMVEVVLADI (128 aa)) is the C2 tensin-type domain. Residues 462-486 (IPTNPSSETASKTPEETSAANSSPV) show a composition bias toward polar residues. A disordered region spans residues 462–589 (IPTNPSSETA…VNASSSSESE (128 aa)). Over residues 495 to 507 (PDKETENPDKDDV) the composition is skewed to basic and acidic residues. Position 509 is a phosphoserine (Ser-509). Composition is skewed to polar residues over residues 514 to 530 (DSTGPTKTTSSASSQTP) and 549 to 565 (VSISGNKGSSQPVQGVT).

This sequence belongs to the PTEN phosphatase protein family. As to expression, expressed in seedlings, roots, stems, leaves, flowers and siliques. However, at protein level, not observed in older leaves and mature siliques.

The catalysed reaction is O-phospho-L-tyrosyl-[protein] + H2O = L-tyrosyl-[protein] + phosphate. It catalyses the reaction a 1,2-diacyl-sn-glycero-3-phospho-(1D-myo-inositol-3,4,5-trisphosphate) + H2O = a 1,2-diacyl-sn-glycero-3-phospho-(1D-myo-inositol-4,5-bisphosphate) + phosphate. Its function is as follows. Binds phosphatidic acid. Protein tyrosine phosphatase that also exhibits lipid phosphatase activity. Hydrolyzed poorly p-nitrophenyl phosphate (p-NPP). Can use PtdIns isomers as substrates. Removes efficiently phosphate from the D3 position of the inositol ring, less from the D4 position and not at all from the D5 position on monophosphorylated PtdIns isomers (PIPs). The presence of a phosphate group in the D5 position on PIP(2) isomers reduces lipid phosphatase activity. Mostly active on PtdIns(3)P and PtdIns(3,4)P(2), to a lower extent, on PtdIns(4)P and PtdIns(3,5)P(2), but barely against PtdIns(3,4,5)P(3) as substrate. The chain is Phosphatidylinositol 3,4,5-trisphosphate 3-phosphatase and protein-tyrosine-phosphatase PTEN2A from Arabidopsis thaliana (Mouse-ear cress).